Here is a 465-residue protein sequence, read N- to C-terminus: Glutamate--tRNA ligase 1 (465 aa).

The short motif at 8-18 (PSPTGLMHLGN) is the 'HIGH' region element. Residues 249–253 (PLSKR) carry the 'KMSKS' region motif. Lys-252 serves as a coordination point for ATP.

Belongs to the class-I aminoacyl-tRNA synthetase family. Glutamate--tRNA ligase type 1 subfamily. Monomer.

Its subcellular location is the cytoplasm. The enzyme catalyses tRNA(Glu) + L-glutamate + ATP = L-glutamyl-tRNA(Glu) + AMP + diphosphate. Catalyzes the attachment of glutamate to tRNA(Glu) in a two-step reaction: glutamate is first activated by ATP to form Glu-AMP and then transferred to the acceptor end of tRNA(Glu). This chain is Glutamate--tRNA ligase 1, found in Coxiella burnetii (strain CbuG_Q212) (Coxiella burnetii (strain Q212)).